Reading from the N-terminus, the 184-residue chain is Signal peptidase complex catalytic subunit SEC11 (184 aa).

Topologically, residues 1 to 28 are cytoplasmic; the sequence is MDFIKEQYNSLVLDLRKTFRNKRDGLSH. The chain crosses the membrane as a helical; Signal-anchor for type II membrane protein span at residues 29–49; it reads ILNVICLLLNALMIWKLLVVF. At 50 to 184 the chain is on the lumenal side; the sequence is TGCESPVVVV…MLIMILMGYE (135 aa). Catalysis depends on charge relay system residues serine 63, histidine 101, and aspartate 127. Residues 170-181 form a C-terminal short (CTS) helix region; it reads AIVSIMLIMILM.

The protein belongs to the peptidase S26B family. As to quaternary structure, component of the signal peptidase complex (SPC) composed of a catalytic subunit SEC11/SPC21 and three accessory subunits SPC25, SPC3/SPC22, SPC1/SPC12. Within the complex, interacts with SPC25. The complex induces a local thinning of the ER membrane which is used to measure the length of the signal peptide (SP) h-region of protein substrates. This ensures the selectivity of the complex towards h-regions shorter than 18-20 amino acids. The complex interacts with the SEC61 channel-forming translocon complex and is involved in the import of classical signal sequence-containing proteins. Phosphorylated. Phosphorylation increases catalytic activity.

The protein localises to the endoplasmic reticulum membrane. The catalysed reaction is Cleavage of hydrophobic, N-terminal signal or leader sequences from secreted and periplasmic proteins.. Phosphorylation increases catalytic activity. Ca(2+) slightly increases catalytic activity in vitro. Its function is as follows. Catalytic component of the signal peptidase complex (SPC) which catalyzes the cleavage of N-terminal signal sequences from nascent proteins as they are translocated into the lumen of the endoplasmic reticulum. Specifically cleaves N-terminal signal peptides that contain a hydrophobic alpha-helix (h-region) shorter than 18-20 amino acids. This is Signal peptidase complex catalytic subunit SEC11 from Plasmodium falciparum (isolate 3D7).